The sequence spans 65 residues: Large ribosomal subunit protein bL35 (65 aa).

The segment covering 1-15 (MPKMKTKKSAAKRFQ) has biased composition (basic residues). Residues 1 to 26 (MPKMKTKKSAAKRFQVRGSGSIKRGQ) are disordered.

Belongs to the bacterial ribosomal protein bL35 family.

The chain is Large ribosomal subunit protein bL35 from Bordetella avium (strain 197N).